Consider the following 218-residue polypeptide: 1-Cys peroxiredoxin PER1 (218 aa).

The region spanning 4–164 is the Thioredoxin domain; that stretch reads LTIGDTVPNL…VVRAVDSLLT (161 aa). The Cysteine sulfenic acid (-SOH) intermediate role is filled by C46. The short motif at 194 to 217 is the Bipartite nuclear localization signal element; the sequence is KKMFPQGFETADLPSKKGYLRFTK.

The protein belongs to the peroxiredoxin family. Prx6 subfamily. In terms of tissue distribution, embryo and aleurone cells.

It localises to the nucleus. The protein resides in the cytoplasm. The catalysed reaction is a hydroperoxide + [thioredoxin]-dithiol = an alcohol + [thioredoxin]-disulfide + H2O. Thiol-specific peroxidase that catalyzes the reduction of hydrogen peroxide and organic hydroperoxides to water and alcohols, respectively. Seems to contribute to the inhibition of germination during stress. This is 1-Cys peroxiredoxin PER1 (PER1) from Hordeum vulgare (Barley).